Reading from the N-terminus, the 457-residue chain is Ribosomal RNA-processing protein 8 (457 aa).

Residues 47–237 are disordered; that stretch reads LEAASLSQQT…KSDSQESRAG (191 aa). Residues 51–61 are compositionally biased toward polar residues; sequence SLSQQTPSLPG. A phosphoserine mark is found at Ser62, Ser64, and Ser105. Residues 129 to 138 are compositionally biased toward basic and acidic residues; that stretch reads GEEKGKRKCQ. Residues 139-183 show a composition bias toward polar residues; sequence EYSSLHLTQPLDSVDQTVHNSRTSTATIDPSKPSPESMSPNSSHT. Phosphoserine is present on residues Ser172 and Ser177. Positions 184–203 are enriched in basic residues; the sequence is LSRKQWRNRQKNKRRHKNKF. Positions 282, 317, 335, 347, 348, and 364 each coordinate S-adenosyl-L-methionine.

It belongs to the methyltransferase superfamily. RRP8 family. Component of the eNoSC complex, composed of SIRT1, SUV39H1 and RRP8.

It is found in the nucleus. The protein localises to the nucleolus. Functionally, essential component of the eNoSC (energy-dependent nucleolar silencing) complex, a complex that mediates silencing of rDNA in response to intracellular energy status and acts by recruiting histone-modifying enzymes. The eNoSC complex is able to sense the energy status of cell: upon glucose starvation, elevation of NAD(+)/NADP(+) ratio activates SIRT1, leading to histone H3 deacetylation followed by dimethylation of H3 at 'Lys-9' (H3K9me2) by SUV39H1 and the formation of silent chromatin in the rDNA locus. In the complex, RRP8 binds to H3K9me2 and probably acts as a methyltransferase. Its substrates are however unknown. This is Ribosomal RNA-processing protein 8 (Rrp8) from Mus musculus (Mouse).